Reading from the N-terminus, the 300-residue chain is UDP-N-acetylenolpyruvoylglucosamine reductase (300 aa).

An FAD-binding PCMH-type domain is found at 30–194 (KVGGPADFFA…LAAVFSLAAG (165 aa)). The active site involves Arg174. Ser223 acts as the Proton donor in catalysis. Glu293 is a catalytic residue.

The protein belongs to the MurB family. Requires FAD as cofactor.

Its subcellular location is the cytoplasm. It carries out the reaction UDP-N-acetyl-alpha-D-muramate + NADP(+) = UDP-N-acetyl-3-O-(1-carboxyvinyl)-alpha-D-glucosamine + NADPH + H(+). It functions in the pathway cell wall biogenesis; peptidoglycan biosynthesis. Its function is as follows. Cell wall formation. The chain is UDP-N-acetylenolpyruvoylglucosamine reductase from Geotalea uraniireducens (strain Rf4) (Geobacter uraniireducens).